We begin with the raw amino-acid sequence, 223 residues long: N-(5'-phosphoribosyl)anthranilate isomerase (223 aa).

It belongs to the TrpF family.

The enzyme catalyses N-(5-phospho-beta-D-ribosyl)anthranilate = 1-(2-carboxyphenylamino)-1-deoxy-D-ribulose 5-phosphate. Its pathway is amino-acid biosynthesis; L-tryptophan biosynthesis; L-tryptophan from chorismate: step 3/5. In Bradyrhizobium diazoefficiens (strain JCM 10833 / BCRC 13528 / IAM 13628 / NBRC 14792 / USDA 110), this protein is N-(5'-phosphoribosyl)anthranilate isomerase.